We begin with the raw amino-acid sequence, 353 residues long: UDP-3-O-acylglucosamine N-acyltransferase (353 aa).

His242 (proton acceptor) is an active-site residue.

It belongs to the transferase hexapeptide repeat family. LpxD subfamily. Homotrimer.

The catalysed reaction is a UDP-3-O-[(3R)-3-hydroxyacyl]-alpha-D-glucosamine + a (3R)-hydroxyacyl-[ACP] = a UDP-2-N,3-O-bis[(3R)-3-hydroxyacyl]-alpha-D-glucosamine + holo-[ACP] + H(+). Its pathway is bacterial outer membrane biogenesis; LPS lipid A biosynthesis. Its function is as follows. Catalyzes the N-acylation of UDP-3-O-acylglucosamine using 3-hydroxyacyl-ACP as the acyl donor. Is involved in the biosynthesis of lipid A, a phosphorylated glycolipid that anchors the lipopolysaccharide to the outer membrane of the cell. This chain is UDP-3-O-acylglucosamine N-acyltransferase, found in Pseudomonas aeruginosa (strain UCBPP-PA14).